Here is a 314-residue protein sequence, read N- to C-terminus: MKKNPKISLIGSGNIGGTLAHLISLRNLGDIVLFDVAEGVPQGKALDLMQAGTIAGSDIKIKGTNDYKDIEGSDAIIITAGLPRKPGISRDDLISINTGIMKNVAENVKKYAPDAFVIVITNPLDVMVYVMLKESGLPHNKVIGMAGVLDSSRFNLFLAEEFKVSVSNVNSTVLGGHGDAMVPLARYSTISGVPIPDLIKMGLSSNKNIEKIIDRTRNGGGEIVALLKTGSAYYAPAASAIEMLEAYLKDKRQILTCAAYLQGEYGVNDLYVGVPIIIGKEGVIKVVELQLTKEEKALFDKSVEGVKKLLDTIK.

Residues 11 to 16 (GSGNIG) and aspartate 35 contribute to the NAD(+) site. 2 residues coordinate substrate: arginine 84 and arginine 90. Residues asparagine 97 and 120–122 (ITN) contribute to the NAD(+) site. Substrate is bound by residues asparagine 122 and arginine 153. The active-site Proton acceptor is histidine 177.

It belongs to the LDH/MDH superfamily. MDH type 3 family.

It carries out the reaction (S)-malate + NAD(+) = oxaloacetate + NADH + H(+). In terms of biological role, catalyzes the reversible oxidation of malate to oxaloacetate. This is Malate dehydrogenase from Rickettsia felis (strain ATCC VR-1525 / URRWXCal2) (Rickettsia azadi).